Consider the following 52-residue polypeptide: Ornatin-B (52 aa).

Residues 42 to 44 (RGD) carry the Cell attachment site motif.

This sequence belongs to the ornatin family.

The protein resides in the secreted. Functionally, potent inhibitor of fibrinogen interaction with platelet receptors expressed on glycoprotein IIb-IIIa complex. May prevent blood from clotting during either feeding and/or storage of ingested blood. The polypeptide is Ornatin-B (Placobdella ornata (Turtle leech)).